A 154-amino-acid chain; its full sequence is Urease accessory protein UreE (154 aa).

The protein belongs to the UreE family.

It is found in the cytoplasm. Involved in urease metallocenter assembly. Binds nickel. Probably functions as a nickel donor during metallocenter assembly. This Escherichia coli O157:H7 protein is Urease accessory protein UreE.